We begin with the raw amino-acid sequence, 442 residues long: MKEQKKVFIKTLGCQMNEYDSARMHEVLNEHFDTVKTDDYKDADIILINTCSIREKAQEKVFHELGRWKGLKKTNEDLIIGVGGCVASQEGENIIKRAPFVDLVFGPQTIHRLPEMIKQKQKTQQSQVDISFPEVEKFDYLPEPKAEGAKAYVSIMEGCDKYCSYCVVPYTRGPEVNRPFEDVLAECAILAEQGVKEITLLGQNVNHYLGPMENGQTADLALLIHFIAEIDGIERIRFTTSHPVEFSQNLIDAYATVPELANHLHLPVQHGSDRILINMKRNHTILEFKQKIRKLRAIRPDITISSDFIVGFPGETEEDFQKLLDLVKEINFDQSFSFIYSKRPGTPAADLPDDTPMEVKKDRLKRLQDLLNSNAQIISRQMVGTNQRILVDGTSKKDDNILSGRTENNRVVNFKGDKSLIGQFAMVKITESLPNSLRGELI.

The MTTase N-terminal domain maps to 5-122 (KKVFIKTLGC…LPEMIKQKQK (118 aa)). [4Fe-4S] cluster-binding residues include cysteine 14, cysteine 51, cysteine 85, cysteine 159, cysteine 163, and cysteine 166. One can recognise a Radical SAM core domain in the interval 145-378 (KAEGAKAYVS…DLLNSNAQII (234 aa)). The TRAM domain occupies 380-442 (RQMVGTNQRI…LPNSLRGELI (63 aa)).

It belongs to the methylthiotransferase family. MiaB subfamily. As to quaternary structure, monomer. [4Fe-4S] cluster is required as a cofactor.

Its subcellular location is the cytoplasm. It catalyses the reaction N(6)-dimethylallyladenosine(37) in tRNA + (sulfur carrier)-SH + AH2 + 2 S-adenosyl-L-methionine = 2-methylsulfanyl-N(6)-dimethylallyladenosine(37) in tRNA + (sulfur carrier)-H + 5'-deoxyadenosine + L-methionine + A + S-adenosyl-L-homocysteine + 2 H(+). In terms of biological role, catalyzes the methylthiolation of N6-(dimethylallyl)adenosine (i(6)A), leading to the formation of 2-methylthio-N6-(dimethylallyl)adenosine (ms(2)i(6)A) at position 37 in tRNAs that read codons beginning with uridine. This chain is tRNA-2-methylthio-N(6)-dimethylallyladenosine synthase, found in Francisella tularensis subsp. tularensis (strain FSC 198).